Consider the following 1574-residue polypeptide: Plexin-C1 (1574 aa).

Positions 1 to 34 (MEVSRRKTPPRPPYPAAPLPLIAYLLALAAPARG) are cleaved as a signal peptide. One can recognise a Sema domain in the interval 35-452 (ADEPVWRSEQ…AGKEVRRIPV (418 aa)). Residues 35–950 (ADEPVWRSEQ…YVEQESVPST (916 aa)) are Extracellular-facing. Cys-64 and Cys-87 are oxidised to a cystine. Asn-86, Asn-143, and Asn-149 each carry an N-linked (GlcNAc...) asparagine glycan. Cys-156 and Cys-194 are oxidised to a cystine. Residue Asn-252 is glycosylated (N-linked (GlcNAc...) asparagine). A disulfide bridge links Cys-283 with Cys-329. Residues Asn-386 and Asn-407 are each glycosylated (N-linked (GlcNAc...) asparagine). Disulfide bonds link Cys-455–Cys-472, Cys-461–Cys-506, Cys-464–Cys-481, and Cys-475–Cys-487. N-linked (GlcNAc...) asparagine glycosylation is found at Asn-694, Asn-773, and Asn-802. The helical transmembrane segment at 951 to 971 (WYFLIALPILLAIVIVVAVVV) threads the bilayer. The Cytoplasmic portion of the chain corresponds to 972–1574 (TRYKSKELSR…FDEKKKCKWM (603 aa)). Ser-984 carries the phosphoserine modification.

Belongs to the plexin family. In terms of assembly, monomer. Homodimer. Interacts with SEMA7A. As to expression, detected on dendritic cells, skin Langerhans cells and neutrophils (at protein level).

The protein localises to the membrane. Its function is as follows. Receptor for SEMA7A, for vaccinia virus semaphorin A39R and for herpesvirus Sema protein. Binding of semaphorins triggers cellular responses leading to the rearrangement of the cytoskeleton and to secretion of IL6 and IL8. The chain is Plexin-C1 (Plxnc1) from Mus musculus (Mouse).